The sequence spans 452 residues: tRNA-2-methylthio-N(6)-dimethylallyladenosine synthase (452 aa).

One can recognise an MTTase N-terminal domain in the interval 16-134; sequence KRFFISTWGC…LPEYIERVKT (119 aa). [4Fe-4S] cluster contacts are provided by Cys25, Cys61, Cys95, Cys171, Cys175, and Cys178. The Radical SAM core domain maps to 157–387; it reads RKSDIKAFVT…VEAVNEIMAR (231 aa). Residues 390–452 enclose the TRAM domain; sequence KEFEGKTVEV…NSFSLTGEII (63 aa).

This sequence belongs to the methylthiotransferase family. MiaB subfamily. In terms of assembly, monomer. [4Fe-4S] cluster is required as a cofactor.

The protein resides in the cytoplasm. The catalysed reaction is N(6)-dimethylallyladenosine(37) in tRNA + (sulfur carrier)-SH + AH2 + 2 S-adenosyl-L-methionine = 2-methylsulfanyl-N(6)-dimethylallyladenosine(37) in tRNA + (sulfur carrier)-H + 5'-deoxyadenosine + L-methionine + A + S-adenosyl-L-homocysteine + 2 H(+). In terms of biological role, catalyzes the methylthiolation of N6-(dimethylallyl)adenosine (i(6)A), leading to the formation of 2-methylthio-N6-(dimethylallyl)adenosine (ms(2)i(6)A) at position 37 in tRNAs that read codons beginning with uridine. This is tRNA-2-methylthio-N(6)-dimethylallyladenosine synthase from Clostridium novyi (strain NT).